Consider the following 133-residue polypeptide: Small ribosomal subunit protein uS11 (133 aa).

The protein belongs to the universal ribosomal protein uS11 family. In terms of assembly, part of the 30S ribosomal subunit. Interacts with proteins S7 and S18. Binds to IF-3.

In terms of biological role, located on the platform of the 30S subunit, it bridges several disparate RNA helices of the 16S rRNA. Forms part of the Shine-Dalgarno cleft in the 70S ribosome. In Chlamydia pneumoniae (Chlamydophila pneumoniae), this protein is Small ribosomal subunit protein uS11.